A 207-amino-acid chain; its full sequence is Thiamine-phosphate synthase (207 aa).

4-amino-2-methyl-5-(diphosphooxymethyl)pyrimidine is bound by residues 36–40 (QLRLK) and N68. 2 residues coordinate Mg(2+): D69 and D88. T107 provides a ligand contact to 4-amino-2-methyl-5-(diphosphooxymethyl)pyrimidine. A 2-[(2R,5Z)-2-carboxy-4-methylthiazol-5(2H)-ylidene]ethyl phosphate-binding site is contributed by 134–136 (TGT). A 4-amino-2-methyl-5-(diphosphooxymethyl)pyrimidine-binding site is contributed by K137. G164 lines the 2-[(2R,5Z)-2-carboxy-4-methylthiazol-5(2H)-ylidene]ethyl phosphate pocket.

Belongs to the thiamine-phosphate synthase family. Mg(2+) is required as a cofactor.

It catalyses the reaction 2-[(2R,5Z)-2-carboxy-4-methylthiazol-5(2H)-ylidene]ethyl phosphate + 4-amino-2-methyl-5-(diphosphooxymethyl)pyrimidine + 2 H(+) = thiamine phosphate + CO2 + diphosphate. The catalysed reaction is 2-(2-carboxy-4-methylthiazol-5-yl)ethyl phosphate + 4-amino-2-methyl-5-(diphosphooxymethyl)pyrimidine + 2 H(+) = thiamine phosphate + CO2 + diphosphate. The enzyme catalyses 4-methyl-5-(2-phosphooxyethyl)-thiazole + 4-amino-2-methyl-5-(diphosphooxymethyl)pyrimidine + H(+) = thiamine phosphate + diphosphate. It functions in the pathway cofactor biosynthesis; thiamine diphosphate biosynthesis; thiamine phosphate from 4-amino-2-methyl-5-diphosphomethylpyrimidine and 4-methyl-5-(2-phosphoethyl)-thiazole: step 1/1. Condenses 4-methyl-5-(beta-hydroxyethyl)thiazole monophosphate (THZ-P) and 2-methyl-4-amino-5-hydroxymethyl pyrimidine pyrophosphate (HMP-PP) to form thiamine monophosphate (TMP). The protein is Thiamine-phosphate synthase of Rhodospirillum centenum (strain ATCC 51521 / SW).